The following is a 166-amino-acid chain: UPF0336 protein ML2425 (166 aa).

Residues 10–131 (LIGKHYRQLD…VIAEVRSEVT (122 aa)) form the MaoC-like domain.

It belongs to the UPF0336 family.

The sequence is that of UPF0336 protein ML2425 from Mycobacterium leprae (strain TN).